Consider the following 220-residue polypeptide: Small ribosomal subunit protein uS3 (220 aa).

Residues Ile24–Ser93 form the KH type-2 domain.

The protein belongs to the universal ribosomal protein uS3 family. In terms of assembly, part of the 30S ribosomal subunit.

Functionally, binds the lower part of the 30S subunit head. This chain is Small ribosomal subunit protein uS3, found in Pyrobaculum arsenaticum (strain DSM 13514 / JCM 11321 / PZ6).